We begin with the raw amino-acid sequence, 682 residues long: MESIHCNSLLNPNFSLNQRRRRINHAVLNRRDALLRSLNAVELRRSRTFSAVRTSNFSVTAAATDVGGRNSTDASVMTTAMSGVERGVRVGKSSSALEQLDIERGVCVPFRKYSPETVRSKVLESRGAVVSLVSRGVEIVWTLGLYWSTLTYDFLVGRDEEVVPFRARQLRNLLCNLGPSFIKAGQVLANRPDIIREDYMNELCILQDDVPPFPNEVAFNIIEEELGQPLENIFSKISSQTIAAASLGQVYRATLRATGEDVAIKVQRPQIEPIIYRDLFLFRTLASFLNGFSLQKLGCNAELIVDEFGEKLLEELDYTLEARNIEDFLENFKDDPTVKIPGVYKNLCGPRVLVMEWIDGIRCTDPQAIKDAGIDLNGFLTVGVSAALRQLLEFGLFHGDPHPGNIFAMQDGRIAYVDFGNVAVLSQQNKQILIDAVVHAVNEDYGEMANDFTRLGFLAKDTDVSPIVPALEAIWQNSAGKGLADFNFRSVTGQFNKLVYDFPIRIPERFSLVIRSLLTQEGICFTLKPDFKFLEVAYPYVAKRLLTDPNPALRERLIQVLFKDGVFQWKRLENLLSLAKENVAKMSSNPNLRVKRVESKLDLTDTIKDGARLFLLDEGIRRKLILALTEDSKLHVEELVDVYRLVEDEVDIPTLAMQVVQDLPNVFRDFVLSWSNSVLSDR.

A chloroplast-targeting transit peptide spans 1–79; sequence MESIHCNSLL…NSTDASVMTT (79 aa). Positions 236–567 constitute a Protein kinase domain; it reads KISSQTIAAA…IQVLFKDGVF (332 aa). ATP contacts are provided by residues 242 to 250 and lysine 265; that span reads IAAASLGQV. Aspartate 400 serves as the catalytic Proton acceptor.

This sequence belongs to the protein kinase superfamily. ADCK protein kinase family. As to quaternary structure, interacts with ABC1K3 in plastoglobules (PG). Expressed in all tissues (e.g. especially in leaves) at all developmental stages from seed germination to flowering, except in the root tips.

The protein localises to the plastid. Its subcellular location is the chloroplast. The protein resides in the plastoglobule. The enzyme catalyses L-seryl-[protein] + ATP = O-phospho-L-seryl-[protein] + ADP + H(+). It carries out the reaction L-threonyl-[protein] + ATP = O-phospho-L-threonyl-[protein] + ADP + H(+). In terms of biological role, kinase that can phosphorylate the tocopherol cyclase VTE1, a key enzyme of tocopherol (vitamin E) metabolism and involved in the recycling of oxidated alpha-tocopherol quinone, possibly stabilizing it at plastoglobules. Also regulates plastoglobule protein composition. Prevents photodamage of chloroplasts under continuous red light, thus working in opposition to ABC1K3. Together with ABC1K1, contributes to plastoglobule (PG) function in prenyl-lipid metabolism, stress response, and thylakoid remodeling. Involved in chlorophyll degradation and in the maintenance of the number of chlorophyll-binding photosynthetic thylakoid membranes. Ensures photosynthetic electron transport by regulating the homeostasis of plastoquinone, beta-carotene and xanthophyll lutein, as well as membrane antioxidant tocopherol metabolism. Seems to affect specifically stability or turnover of D1 protein, product of psbA, one of the four core subunits of the photosystem II (PSII). Required for photooxidative stress responses, including the induction of oxidative stress response genes (e.g. FSD1, CSD1, CAT1, and UTG71C1), to prevent photosystem II core and chlorophyll degradations. This is Protein ACTIVITY OF BC1 COMPLEX KINASE 1, chloroplastic from Arabidopsis thaliana (Mouse-ear cress).